The following is a 500-amino-acid chain: Glycerol kinase (500 aa).

Residue Thr-16 participates in ADP binding. Positions 16 and 17 each coordinate ATP. Thr-16 is a binding site for sn-glycerol 3-phosphate. Arg-20 contacts ADP. Positions 86, 87, 138, and 247 each coordinate sn-glycerol 3-phosphate. 5 residues coordinate glycerol: Arg-86, Glu-87, Tyr-138, Asp-247, and Gln-248. The ADP site is built by Thr-269 and Gly-312. ATP is bound by residues Thr-269, Gly-312, Gln-316, and Gly-413. Positions 413 and 417 each coordinate ADP.

Belongs to the FGGY kinase family.

The catalysed reaction is glycerol + ATP = sn-glycerol 3-phosphate + ADP + H(+). It participates in polyol metabolism; glycerol degradation via glycerol kinase pathway; sn-glycerol 3-phosphate from glycerol: step 1/1. Inhibited by fructose 1,6-bisphosphate (FBP). Functionally, key enzyme in the regulation of glycerol uptake and metabolism. Catalyzes the phosphorylation of glycerol to yield sn-glycerol 3-phosphate. This chain is Glycerol kinase, found in Rippkaea orientalis (strain PCC 8801 / RF-1) (Cyanothece sp. (strain PCC 8801)).